The chain runs to 288 residues: Histone H3-like centromeric protein hcp-3 (288 aa).

A disordered region spans residues 96 to 194; the sequence is YHARKEQARR…VTKTRRYRPG (99 aa). Basic residues predominate over residues 178–193; it reads MRAGRNRVTKTRRYRP. Positions 191–288 are H3-like; that stretch reads YRPGQKALEE…LYRRLCLRHL (98 aa).

Belongs to the histone H3 family. In terms of assembly, forms a nucleosome-like histone octamer containing two molecules each of H2A, H2B, hcp-3 and H4 assembled in one hcp-3-H4 heterotetramer and two H2A-H2B heterodimers. The hcp-3-H4 heterotetramer is more compact and structurally more rigid than corresponding H3-H4 heterotetramers. Interacts with knl-2. Interacts with lin-53.

It is found in the nucleus. The protein resides in the chromosome. The protein localises to the centromere. Its subcellular location is the kinetochore. In terms of biological role, histone H3-like variant which exclusively replaces conventional H3 in the nucleosome core of centromeric chromatin at the inner plate of the kinetochore. Required for recruitment and assembly of kinetochore proteins, mitotic progression and chromosome segregation. May serve as an epigenetic mark that propagates centromere identity through replication and cell division. Might promote cleavage furrow stability during cytokinesis. Not required for chromosome segregation during meiosis. This is Histone H3-like centromeric protein hcp-3 from Caenorhabditis elegans.